Consider the following 126-residue polypeptide: Holo-[acyl-carrier-protein] synthase (126 aa).

Asp9 and Glu58 together coordinate Mg(2+).

It belongs to the P-Pant transferase superfamily. AcpS family. Mg(2+) is required as a cofactor.

The protein localises to the cytoplasm. It catalyses the reaction apo-[ACP] + CoA = holo-[ACP] + adenosine 3',5'-bisphosphate + H(+). Functionally, transfers the 4'-phosphopantetheine moiety from coenzyme A to a Ser of acyl-carrier-protein. This Yersinia pestis bv. Antiqua (strain Angola) protein is Holo-[acyl-carrier-protein] synthase.